The sequence spans 117 residues: Crustacean hyperglycemic hormones 3 (117 aa).

Positions 1–24 (MVTPRMLSALSAVLLLVLTASSSA) are cleaved as a signal peptide. 3 disulfide bridges follow: C50/C86, C66/C82, and C69/C95. Valine amide is present on V115.

The protein belongs to the arthropod CHH/MIH/GIH/VIH hormone family. Produced by the medulla terminalis X-organ in the eyestalks and transported to the sinus gland where they are stored and released.

The protein localises to the secreted. In terms of biological role, hormone found in the sinus gland of isopods and decapods which controls the blood sugar level. Has a secretagogue action over the amylase released from the midgut gland. May act as a stress hormone and may be involved in the control of molting and reproduction. The chain is Crustacean hyperglycemic hormones 3 from Penaeus japonicus (Kuruma prawn).